The following is a 431-amino-acid chain: Trigger factor (431 aa).

Residues 163–248 form the PPIase FKBP-type domain; sequence GHFAVIDFTG…LSEIKVKELP (86 aa).

This sequence belongs to the FKBP-type PPIase family. Tig subfamily.

The protein resides in the cytoplasm. It catalyses the reaction [protein]-peptidylproline (omega=180) = [protein]-peptidylproline (omega=0). Functionally, involved in protein export. Acts as a chaperone by maintaining the newly synthesized protein in an open conformation. Functions as a peptidyl-prolyl cis-trans isomerase. This chain is Trigger factor, found in Geobacter sulfurreducens (strain ATCC 51573 / DSM 12127 / PCA).